The sequence spans 599 residues: NADH-ubiquinone oxidoreductase chain 5 (599 aa).

A run of 16 helical transmembrane segments spans residues methionine 1–phenylalanine 21, phenylalanine 28–methionine 48, cysteine 81–methionine 101, glycine 115–isoleucine 135, glycine 171–phenylalanine 191, glycine 193–alanine 213, threonine 233–isoleucine 253, isoleucine 265–leucine 285, leucine 302–isoleucine 322, cysteine 323–leucine 343, serine 363–phenylalanine 383, asparagine 398–leucine 420, valine 455–leucine 475, leucine 481–leucine 501, isoleucine 510–isoleucine 530, and leucine 577–isoleucine 597.

The protein belongs to the complex I subunit 5 family.

The protein resides in the mitochondrion inner membrane. The catalysed reaction is a ubiquinone + NADH + 5 H(+)(in) = a ubiquinol + NAD(+) + 4 H(+)(out). Its function is as follows. Core subunit of the mitochondrial membrane respiratory chain NADH dehydrogenase (Complex I) that is believed to belong to the minimal assembly required for catalysis. Complex I functions in the transfer of electrons from NADH to the respiratory chain. The immediate electron acceptor for the enzyme is believed to be ubiquinone. The chain is NADH-ubiquinone oxidoreductase chain 5 (ND5) from Branchiostoma floridae (Florida lancelet).